A 422-amino-acid polypeptide reads, in one-letter code: 26S proteasome non-ATPase regulatory subunit 11B (422 aa).

In terms of domain architecture, PCI spans alanine 228–proline 392.

It belongs to the proteasome subunit S9 family. Component of the lid subcomplex of the 19S proteasome regulatory particle complex (also named PA700 complex). The 26S proteasome consists of a 20S proteasome core and two 19S regulatory subunits.

The protein resides in the nucleus. It localises to the cytoplasm. Its subcellular location is the cytosol. In terms of biological role, component of the lid subcomplex of the 26S proteasome, a multiprotein complex involved in the ATP-dependent degradation of ubiquitinated proteins. In the complex, psmd11b is required for proteasome assembly. This chain is 26S proteasome non-ATPase regulatory subunit 11B (psmd11b), found in Danio rerio (Zebrafish).